The sequence spans 279 residues: Arabinooligosaccharides transport system permease protein AraQ (279 aa).

6 consecutive transmembrane segments (helical) span residues 8–28 (ILSWLLTIGFAFIAFIAVFPL), 79–99 (VWISIVIVVLSLLFSSMVGYA), 110–130 (FFFLLVLIILMIPFEILMLPL), 140–160 (VNTYTAVILPAIVAPIAVFFF), 184–204 (GIFFKIMLPLMGPSLAAMAIL), and 245–265 (ILLAGSVMTIVPIVILFIFFQ). The ABC transmembrane type-1 domain maps to 75–264 (FGNSVWISIV…VPIVILFIFF (190 aa)).

It belongs to the binding-protein-dependent transport system permease family. MalFG subfamily. As to quaternary structure, the complex is composed of two ATP-binding proteins (MsmX), two transmembrane proteins (AraP and AraQ) and a solute-binding protein (AraN).

Its subcellular location is the cell membrane. Part of the ABC transporter complex AraNPQ involved in the uptake of arabinooligosaccharides. Responsible for the translocation of the substrate across the membrane. The sequence is that of Arabinooligosaccharides transport system permease protein AraQ (araQ) from Halalkalibacterium halodurans (strain ATCC BAA-125 / DSM 18197 / FERM 7344 / JCM 9153 / C-125) (Bacillus halodurans).